The sequence spans 418 residues: Staphyloferrin B transporter (418 aa).

10 helical membrane passes run 19–39, 49–69, 88–108, 163–183, 222–242, 257–277, 287–307, 317–337, 353–373, and 377–397; these read FIAI…MASL, LWSG…SPIW, GLAV…FVLV, ILGF…VCIF, FIIV…ALSP, VIGF…PLWG, SVYI…GLAT, ILQG…VVNA, MLVV…SYTT, and TFIV…CSTI.

It belongs to the major facilitator superfamily.

The protein localises to the cell membrane. Its function is as follows. Involved in staphyloferrin B secretion. This Staphylococcus aureus (strain NCTC 8325 / PS 47) protein is Staphyloferrin B transporter.